A 157-amino-acid polypeptide reads, in one-letter code: MSRNEAPEQRTTQPDPVYRDDMVSRFVNAIMRDGKKSLARRIVYDTFDVIEERTGEEEGLEVFKKAVNNAAPLVEVRSRRVGGATYQVPTEVRPERRITLAFRWIIQYARARNEKSMVNRLASELVDAARGEGGAVKKKDDTHRMAESNKAFAHFQF.

It belongs to the universal ribosomal protein uS7 family. As to quaternary structure, part of the 30S ribosomal subunit. Contacts proteins S9 and S11.

In terms of biological role, one of the primary rRNA binding proteins, it binds directly to 16S rRNA where it nucleates assembly of the head domain of the 30S subunit. Is located at the subunit interface close to the decoding center, probably blocks exit of the E-site tRNA. This Salinibacter ruber (strain DSM 13855 / M31) protein is Small ribosomal subunit protein uS7.